Reading from the N-terminus, the 301-residue chain is Probable alpha-L-glutamate ligase (301 aa).

Residues 104–287 (LQLLSRKGIG…VAGLIYEFIE (184 aa)) form the ATP-grasp domain. ATP contacts are provided by residues Lys141, 178 to 179 (EF), Asp187, and 211 to 213 (RSN). Residues Asp248, Glu260, and Asn262 each contribute to the Mg(2+) site. Asp248, Glu260, and Asn262 together coordinate Mn(2+).

It belongs to the RimK family. Requires Mg(2+) as cofactor. Mn(2+) serves as cofactor.

This is Probable alpha-L-glutamate ligase from Shewanella loihica (strain ATCC BAA-1088 / PV-4).